Consider the following 526-residue polypeptide: Peptide chain release factor 3 (526 aa).

The tr-type G domain occupies 8–277; it reads NKRRTFAIIS…GLTQWAPAPQ (270 aa). GTP is bound by residues 17–24, 85–89, and 139–142; these read SHPDAGKT, DTPGH, and NKLD.

The protein belongs to the TRAFAC class translation factor GTPase superfamily. Classic translation factor GTPase family. PrfC subfamily.

The protein resides in the cytoplasm. Increases the formation of ribosomal termination complexes and stimulates activities of RF-1 and RF-2. It binds guanine nucleotides and has strong preference for UGA stop codons. It may interact directly with the ribosome. The stimulation of RF-1 and RF-2 is significantly reduced by GTP and GDP, but not by GMP. The polypeptide is Peptide chain release factor 3 (Histophilus somni (strain 2336) (Haemophilus somnus)).